The sequence spans 232 residues: Orotate phosphoribosyltransferase (232 aa).

5-phospho-alpha-D-ribose 1-diphosphate-binding positions include arginine 107, lysine 108, lysine 111, histidine 113, and glutamate 133–serine 141. Residue threonine 137 coordinates orotate.

Belongs to the purine/pyrimidine phosphoribosyltransferase family. PyrE subfamily. As to quaternary structure, homodimer. Requires Mg(2+) as cofactor.

The catalysed reaction is orotidine 5'-phosphate + diphosphate = orotate + 5-phospho-alpha-D-ribose 1-diphosphate. Its pathway is pyrimidine metabolism; UMP biosynthesis via de novo pathway; UMP from orotate: step 1/2. Its function is as follows. Catalyzes the transfer of a ribosyl phosphate group from 5-phosphoribose 1-diphosphate to orotate, leading to the formation of orotidine monophosphate (OMP). The protein is Orotate phosphoribosyltransferase of Agrobacterium fabrum (strain C58 / ATCC 33970) (Agrobacterium tumefaciens (strain C58)).